We begin with the raw amino-acid sequence, 284 residues long: Avenin-like b10 (284 aa).

The first 18 residues, M1–A18, serve as a signal peptide directing secretion.

It belongs to the prolamin family. In terms of processing, contains disulfide bonds.

In terms of biological role, seed storage protein. Might be integrated via inter-chain disulfide bonds within the glutenin polymer. The chain is Avenin-like b10 from Triticum aestivum (Wheat).